Reading from the N-terminus, the 302-residue chain is Acetylglutamate kinase (302 aa).

Substrate contacts are provided by residues 73–74 (GG), Arg-95, and Asn-200.

This sequence belongs to the acetylglutamate kinase family. ArgB subfamily.

Its subcellular location is the cytoplasm. It catalyses the reaction N-acetyl-L-glutamate + ATP = N-acetyl-L-glutamyl 5-phosphate + ADP. It participates in amino-acid biosynthesis; L-arginine biosynthesis; N(2)-acetyl-L-ornithine from L-glutamate: step 2/4. Its function is as follows. Catalyzes the ATP-dependent phosphorylation of N-acetyl-L-glutamate. In Sphingopyxis alaskensis (strain DSM 13593 / LMG 18877 / RB2256) (Sphingomonas alaskensis), this protein is Acetylglutamate kinase.